A 130-amino-acid chain; its full sequence is Holo-[acyl-carrier-protein] synthase (130 aa).

Residues Asp-9 and Glu-58 each coordinate Mg(2+).

This sequence belongs to the P-Pant transferase superfamily. AcpS family. It depends on Mg(2+) as a cofactor.

The protein localises to the cytoplasm. It carries out the reaction apo-[ACP] + CoA = holo-[ACP] + adenosine 3',5'-bisphosphate + H(+). Its function is as follows. Transfers the 4'-phosphopantetheine moiety from coenzyme A to a Ser of acyl-carrier-protein. The chain is Holo-[acyl-carrier-protein] synthase from Mycolicibacterium paratuberculosis (strain ATCC BAA-968 / K-10) (Mycobacterium paratuberculosis).